The sequence spans 61 residues: MFTLKKTLLLLFFLGTINLSLCEEERNAEEERRDGDDEMDVEVKKRFISGLIGGLMKALGK.

An N-terminal signal peptide occupies residues 1–22; that stretch reads MFTLKKTLLLLFFLGTINLSLC. Positions 23–44 are cleaved as a propeptide — removed in mature form; it reads EEERNAEEERRDGDDEMDVEVK. Lysine amide is present on K61.

It belongs to the frog skin active peptide (FSAP) family. Temporin subfamily. Expressed by the skin glands.

It localises to the secreted. Its function is as follows. Antimicrobial peptide. Active against some Gram-positive and Gram-negative bacterial strains. Active against fungus C.glabrata 090902 but not against C.albicans ATCC 12231. Shows weak hemolytic activity against human erythrocytes. This Sylvirana spinulosa (Fine-spined frog) protein is Temporin-SN3.